A 1280-amino-acid chain; its full sequence is Ankyrin repeat and sterile alpha motif domain-containing protein 1B (1280 aa).

7 ANK repeats span residues 2 to 31, 57 to 86, 90 to 119, 126 to 155, 159 to 188, 192 to 221, and 224 to 253; these read GKEQELLEAARTGNVGLVEKLLSGKKGLLG, SGYTPLHHASLNGHRDVVLKLLQFEASTNV, KGCFPLHLAAWRGDVDIVQILIHHGPSHSR, EKETALHCAAQYGHSEVVRVLLQELTDPSM, RGETPLDLAALYGRLQVVRMLLTAHPNLMS, RKHTPLHLAARNGHYATVQVLLEADMDVNT, and EKGSALHEAALFGKMDVVQLLLDSGIDANI. 5 disordered regions span residues 299–322, 361–399, 479–573, 704–723, and 755–791; these read RHRPIPTPRTSIPSPVPSPSLRHK, MESFGSGRLSDEERNGTLTRINKRPTPPLPPALEEEEKS, SVSD…STGS, NGEARSNCTGGSSPANSNTG, and SNLVAVSPIEEEQWGSRGQSSPGKSSPSRLERTPSFT. The segment covering 482–491 has biased composition (basic and acidic residues); sequence DAERGNHGDD. 3 stretches are compositionally biased toward polar residues: residues 520–550, 707–723, and 770–782; these read KQRTSLSSSQDVQKPLQNHSGDPSEVSSSLG, ARSNCTGGSSPANSNTG, and SRGQSSPGKSSPS. 2 consecutive SAM domains span residues 824–890 and 898–963; these read CPVQ…LPRV and NNPT…RLHE. 2 disordered regions span residues 960–994 and 1208–1243; these read RLHEDPPQKPPRAISLREPTGNHTPPQLSPSLSQA and GSSTLPESFDSKPSKPVPKPRGNIRKSMEQPSMDQK. Residues 980-994 show a composition bias toward polar residues; it reads GNHTPPQLSPSLSQA. The region spanning 1071–1223 is the PID domain; that stretch reads IFQSCDYEAY…ESFDSKPSKP (153 aa).

The protein resides in the cytoplasm. The chain is Ankyrin repeat and sterile alpha motif domain-containing protein 1B (anks1b) from Danio rerio (Zebrafish).